Reading from the N-terminus, the 76-residue chain is Kappa-actitoxin-Avd4l (76 aa).

The first 19 residues, 1 to 19, serve as a signal peptide directing secretion; the sequence is MNKALFLCLVVLCAAVVFA. Residues 20-31 constitute a propeptide that is removed on maturation; sequence AEDLQKAKHAPF. 3 disulfides stabilise this stretch: Cys37–Cys72, Cys39–Cys65, and Cys55–Cys73.

The protein belongs to the sea anemone type 3 (BDS) potassium channel toxin family. In terms of tissue distribution, weakly expressed in the ectodermal tissue from the distal and proximal tentacles, body wall, and oral disk.

Its subcellular location is the secreted. The protein localises to the nematocyst. In terms of biological role, blocks Kv3 voltage-gated potassium channels. Reduces blood pressure. The protein is Kappa-actitoxin-Avd4l of Anemonia viridis (Snakelocks anemone).